The sequence spans 478 residues: Ribulose bisphosphate carboxylase large chain (478 aa).

A propeptide spanning residues 1–2 is cleaved from the precursor; sequence MS. Residue proline 3 is modified to N-acetylproline. An N6,N6,N6-trimethyllysine modification is found at lysine 14. Substrate is bound by residues asparagine 123 and threonine 173. Residue lysine 175 is the Proton acceptor of the active site. Lysine 177 contributes to the substrate binding site. Mg(2+)-binding residues include lysine 201, aspartate 203, and glutamate 204. Lysine 201 is modified (N6-carboxylysine). The active-site Proton acceptor is histidine 294. Arginine 295, histidine 327, and serine 379 together coordinate substrate.

The protein belongs to the RuBisCO large chain family. Type I subfamily. In terms of assembly, heterohexadecamer of 8 large chains and 8 small chains; disulfide-linked. The disulfide link is formed within the large subunit homodimers. Requires Mg(2+) as cofactor. In terms of processing, the disulfide bond which can form in the large chain dimeric partners within the hexadecamer appears to be associated with oxidative stress and protein turnover.

The protein localises to the plastid. Its subcellular location is the chloroplast. The catalysed reaction is 2 (2R)-3-phosphoglycerate + 2 H(+) = D-ribulose 1,5-bisphosphate + CO2 + H2O. It catalyses the reaction D-ribulose 1,5-bisphosphate + O2 = 2-phosphoglycolate + (2R)-3-phosphoglycerate + 2 H(+). RuBisCO catalyzes two reactions: the carboxylation of D-ribulose 1,5-bisphosphate, the primary event in carbon dioxide fixation, as well as the oxidative fragmentation of the pentose substrate in the photorespiration process. Both reactions occur simultaneously and in competition at the same active site. This chain is Ribulose bisphosphate carboxylase large chain, found in Neurachne tenuifolia.